The chain runs to 128 residues: Large-conductance mechanosensitive channel (128 aa).

The next 2 helical transmembrane spans lie at 10–30 and 76–96; these read FAMRGNVVDMAVGVIIGGAFG and GMFIQNVFDFIIIAFAIFLMI.

Belongs to the MscL family. In terms of assembly, homopentamer.

The protein localises to the cell inner membrane. Functionally, channel that opens in response to stretch forces in the membrane lipid bilayer. May participate in the regulation of osmotic pressure changes within the cell. The chain is Large-conductance mechanosensitive channel from Actinobacillus succinogenes (strain ATCC 55618 / DSM 22257 / CCUG 43843 / 130Z).